Consider the following 209-residue polypeptide: Guanylate kinase (209 aa).

The Guanylate kinase-like domain maps to 5–184; the sequence is GLLIVFSGPS…AAERVKRVIE (180 aa). Residue 12-19 participates in ATP binding; sequence GPSGVGKG.

This sequence belongs to the guanylate kinase family.

It is found in the cytoplasm. The catalysed reaction is GMP + ATP = GDP + ADP. In terms of biological role, essential for recycling GMP and indirectly, cGMP. In Streptococcus agalactiae serotype Ia (strain ATCC 27591 / A909 / CDC SS700), this protein is Guanylate kinase.